A 66-amino-acid chain; its full sequence is Protein KleD (66 aa).

The segment at residues 33–52 (VAVRSGNEWQQVTKWVEPAR) is a DNA-binding region (H-T-H motif).

The protein is Protein KleD (kleD) of Escherichia coli.